We begin with the raw amino-acid sequence, 212 residues long: Large ribosomal subunit protein uL3 (212 aa).

At Q154 the chain carries N5-methylglutamine.

It belongs to the universal ribosomal protein uL3 family. In terms of assembly, part of the 50S ribosomal subunit. Forms a cluster with proteins L14 and L19. In terms of processing, methylated by PrmB.

Its function is as follows. One of the primary rRNA binding proteins, it binds directly near the 3'-end of the 23S rRNA, where it nucleates assembly of the 50S subunit. This is Large ribosomal subunit protein uL3 from Hydrogenovibrio crunogenus (strain DSM 25203 / XCL-2) (Thiomicrospira crunogena).